Here is a 133-residue protein sequence, read N- to C-terminus: DNA-directed RNA polymerases I and III subunit RPAC2 (133 aa).

Methionine 1 carries the N-acetylmethionine modification.

Belongs to the archaeal Rpo11/eukaryotic RPB11/RPC19 RNA polymerase subunit family. In terms of assembly, component of the RNA polymerase I and RNA polymerase III complexes consisting of at least 13 and 17 subunits, respectively. Pol I complex consists of a ten-subunit catalytic core composed of POLR1A/RPA1, POLR1B/RPA2, POLR1C/RPAC1, POLR1D/RPAC2, POLR1H/RPA12, POLR2E/RPABC1, POLR2F/RPABC2, POLR2H/RPABC3, POLR2K/RPABC4 and POLR2L/RPABC5; a mobile stalk subunit POLR1F/RPA43 protruding from the core and additional subunits homologous to general transcription factors POLR1E/RPA49 and POLR1G/RPA34. Part of Pol I pre-initiation complex (PIC), in which Pol I core assembles with RRN3 and promoter-bound UTBF and SL1/TIF-IB complex. Pol III complex consists of a ten-subunit catalytic core composed of POLR3A/RPC1, POLR3B/RPC2, POLR1C/RPAC1, POLR1D/RPAC2, POLR3K/RPC10, POLR2E/RPABC1, POLR2F/RPABC2, POLR2H/RPABC3, POLR2K/RPABC4 and POLR2L/RPABC5; a mobile stalk composed of two subunits POLR3H/RPC8 and CRCP/RPC9, protruding from the core and functioning primarily in transcription initiation; and additional subunits homologous to general transcription factors of the RNA polymerase II machinery, POLR3C/RPC3-POLR3F/RPC6-POLR3G/RPC7 heterotrimer required for transcription initiation and POLR3D/RPC4-POLR3E/RPC5 heterodimer involved in both transcription initiation and termination.

The protein resides in the nucleus. The protein localises to the nucleolus. DNA-dependent RNA polymerase catalyzes the transcription of DNA into RNA using the four ribonucleoside triphosphates as substrates. Common component of RNA polymerases I and III which synthesize ribosomal RNA precursors and short non-coding RNAs including 5S rRNA, snRNAs, tRNAs and miRNAs, respectively. This is DNA-directed RNA polymerases I and III subunit RPAC2 from Homo sapiens (Human).